Here is a 405-residue protein sequence, read N- to C-terminus: Glucose-1-phosphate adenylyltransferase 1 (405 aa).

Alpha-D-glucose 1-phosphate contacts are provided by residues Y96, G161, 176-177 (EK), and S194.

This sequence belongs to the bacterial/plant glucose-1-phosphate adenylyltransferase family. Homotetramer.

The enzyme catalyses alpha-D-glucose 1-phosphate + ATP + H(+) = ADP-alpha-D-glucose + diphosphate. Its pathway is glycan biosynthesis; glycogen biosynthesis. Functionally, involved in the biosynthesis of ADP-glucose, a building block required for the elongation reactions to produce glycogen. Catalyzes the reaction between ATP and alpha-D-glucose 1-phosphate (G1P) to produce pyrophosphate and ADP-Glc. This chain is Glucose-1-phosphate adenylyltransferase 1, found in Vibrio cholerae serotype O1 (strain ATCC 39315 / El Tor Inaba N16961).